The primary structure comprises 1420 residues: DNA-directed RNA polymerase subunit beta' (1420 aa).

Residues Cys70, Cys72, Cys85, and Cys88 each contribute to the Zn(2+) site. Positions 464, 466, and 468 each coordinate Mg(2+). Zn(2+) is bound by residues Cys823, Cys897, Cys904, and Cys907.

Belongs to the RNA polymerase beta' chain family. In terms of assembly, the RNAP catalytic core consists of 2 alpha, 1 beta, 1 beta' and 1 omega subunit. When a sigma factor is associated with the core the holoenzyme is formed, which can initiate transcription. It depends on Mg(2+) as a cofactor. Zn(2+) is required as a cofactor.

It carries out the reaction RNA(n) + a ribonucleoside 5'-triphosphate = RNA(n+1) + diphosphate. Its function is as follows. DNA-dependent RNA polymerase catalyzes the transcription of DNA into RNA using the four ribonucleoside triphosphates as substrates. The protein is DNA-directed RNA polymerase subunit beta' of Polynucleobacter necessarius subsp. necessarius (strain STIR1).